The primary structure comprises 505 residues: Aspartyl/glutamyl-tRNA(Asn/Gln) amidotransferase subunit B (505 aa).

The protein belongs to the GatB/GatE family. GatB subfamily. In terms of assembly, heterotrimer of A, B and C subunits.

It catalyses the reaction L-glutamyl-tRNA(Gln) + L-glutamine + ATP + H2O = L-glutaminyl-tRNA(Gln) + L-glutamate + ADP + phosphate + H(+). It carries out the reaction L-aspartyl-tRNA(Asn) + L-glutamine + ATP + H2O = L-asparaginyl-tRNA(Asn) + L-glutamate + ADP + phosphate + 2 H(+). Functionally, allows the formation of correctly charged Asn-tRNA(Asn) or Gln-tRNA(Gln) through the transamidation of misacylated Asp-tRNA(Asn) or Glu-tRNA(Gln) in organisms which lack either or both of asparaginyl-tRNA or glutaminyl-tRNA synthetases. The reaction takes place in the presence of glutamine and ATP through an activated phospho-Asp-tRNA(Asn) or phospho-Glu-tRNA(Gln). The polypeptide is Aspartyl/glutamyl-tRNA(Asn/Gln) amidotransferase subunit B (Streptomyces avermitilis (strain ATCC 31267 / DSM 46492 / JCM 5070 / NBRC 14893 / NCIMB 12804 / NRRL 8165 / MA-4680)).